The following is a 369-amino-acid chain: Chorismate synthase (369 aa).

NADP(+)-binding residues include Arg-48 and Arg-54. FMN is bound by residues 125–127, 238–239, Gly-278, 293–297, and Arg-319; these read RSS, NA, and KPTSS.

Belongs to the chorismate synthase family. As to quaternary structure, homotetramer. It depends on FMNH2 as a cofactor.

It catalyses the reaction 5-O-(1-carboxyvinyl)-3-phosphoshikimate = chorismate + phosphate. It functions in the pathway metabolic intermediate biosynthesis; chorismate biosynthesis; chorismate from D-erythrose 4-phosphate and phosphoenolpyruvate: step 7/7. Catalyzes the anti-1,4-elimination of the C-3 phosphate and the C-6 proR hydrogen from 5-enolpyruvylshikimate-3-phosphate (EPSP) to yield chorismate, which is the branch point compound that serves as the starting substrate for the three terminal pathways of aromatic amino acid biosynthesis. This reaction introduces a second double bond into the aromatic ring system. This is Chorismate synthase from Cupriavidus metallidurans (strain ATCC 43123 / DSM 2839 / NBRC 102507 / CH34) (Ralstonia metallidurans).